The sequence spans 101 residues: uncharacterized protein (101 aa).

Residues 1 to 12 (MAAFQHRAKRSK) show a composition bias toward basic residues. Disordered regions lie at residues 1–30 (MAAF…KKRA) and 65–87 (AQDQ…NVDK). A compositionally biased stretch (low complexity) spans 65–78 (AQDQRSDAQAQQQR).

This is an uncharacterized protein from Eremothecium gossypii (strain ATCC 10895 / CBS 109.51 / FGSC 9923 / NRRL Y-1056) (Yeast).